Here is a 145-residue protein sequence, read N- to C-terminus: Internal scaffolding protein VP3 (145 aa).

Belongs to the microviridae B protein family.

The protein resides in the host cytoplasm. Participates in the assembly of the viral procapsid in the cytoplasm. Released from the procapsid upon genome packaging, possibly through affinity displacement by the protein ORF8, or by proteolysis. The protein is Internal scaffolding protein VP3 of Chlamydia phage 1 (Bacteriophage Chp1).